We begin with the raw amino-acid sequence, 258 residues long: UPF0246 protein Pnap_3166 (258 aa).

Belongs to the UPF0246 family.

This chain is UPF0246 protein Pnap_3166, found in Polaromonas naphthalenivorans (strain CJ2).